We begin with the raw amino-acid sequence, 437 residues long: tRNA(Ile)-lysidine synthase (437 aa).

22–27 (SGGLDS) contributes to the ATP binding site.

This sequence belongs to the tRNA(Ile)-lysidine synthase family.

Its subcellular location is the cytoplasm. It catalyses the reaction cytidine(34) in tRNA(Ile2) + L-lysine + ATP = lysidine(34) in tRNA(Ile2) + AMP + diphosphate + H(+). Its function is as follows. Ligates lysine onto the cytidine present at position 34 of the AUA codon-specific tRNA(Ile) that contains the anticodon CAU, in an ATP-dependent manner. Cytidine is converted to lysidine, thus changing the amino acid specificity of the tRNA from methionine to isoleucine. The sequence is that of tRNA(Ile)-lysidine synthase from Xylella fastidiosa (strain Temecula1 / ATCC 700964).